A 356-amino-acid chain; its full sequence is Heat-inducible transcription repressor HrcA (356 aa).

This sequence belongs to the HrcA family.

Negative regulator of class I heat shock genes (grpE-dnaK-dnaJ and groELS operons). Prevents heat-shock induction of these operons. The polypeptide is Heat-inducible transcription repressor HrcA (Gluconobacter oxydans (strain 621H) (Gluconobacter suboxydans)).